The following is a 98-amino-acid chain: Lipolysis-activating peptide 1-alpha chain (98 aa).

Residues 1 to 22 form the signal peptide; it reads MMKLVLFGIIVILFSMIGSIHG. The LCN-type CS-alpha/beta domain maps to 26 to 89; it reads PGNYPLNTYG…IWDAVKRHCK (64 aa). 3 disulfide bridges follow: Cys-40–Cys-63, Cys-49–Cys-68, and Cys-53–Cys-70. Lysine amide is present on Lys-96.

The protein belongs to the long (3 C-C) scorpion toxin superfamily. In terms of assembly, monomer (edited version) and heterodimer (non-edited version) of this alpha chain and a beta chain (AC B8XGZ8). As to expression, expressed by the venom gland.

It is found in the secreted. In terms of biological role, the heterodimer non-edited LVP1 induces lipolysis in rat adipocytes. Induction of lipolysis by LVP1 appears to be mediated through the beta-2 adrenergic receptor pathway (ADRB2). Functionally, the edited BmKBTx-like, similar to beta-toxins, may modulate voltage-gated sodium channels (Nav) and may block voltage-gated potassium channels (Kv). In Buthus israelis (Israeli scorpion), this protein is Lipolysis-activating peptide 1-alpha chain.